We begin with the raw amino-acid sequence, 176 residues long: Ferritin, middle subunit (176 aa).

Residues 7–156 form the Ferritin-like diiron domain; that stretch reads QNYHRDCEAA…DFITNLSRMD (150 aa). Fe cation contacts are provided by Glu-24, Glu-59, His-62, Glu-104, and Gln-138.

It belongs to the ferritin family. As to quaternary structure, in liver, forms a heteromer consisting of middle and heavy subunits. In spleen, forms a homomer. The functional molecule forms a roughly spherical shell with a diameter of 12 nm and contains a central cavity into which the insoluble mineral iron core is deposited. As to expression, liver and spleen (at protein level).

The catalysed reaction is 4 Fe(2+) + O2 + 4 H(+) = 4 Fe(3+) + 2 H2O. Functionally, stores iron in a soluble, non-toxic, readily available form. Important for iron homeostasis. Has ferroxidase activity. Iron is taken up in the ferrous form and deposited as ferric hydroxides after oxidation. The sequence is that of Ferritin, middle subunit from Trematomus newnesi (Dusky notothen).